The sequence spans 400 residues: Iron(III) enterobactin esterase (400 aa).

The protein belongs to the Fes family.

The protein localises to the cytoplasm. The catalysed reaction is Fe(III)-enterobactin + 3 H2O + H(+) = Fe(III)-[N-(2,3-dihydroxybenzoyl)-L-serine] + 2 N-(2,3-dihydroxybenzoyl)-L-serine. It carries out the reaction Fe(III)-enterobactin + H2O = Fe(III)-[N-(2,3-dihydroxybenzoyl)-L-serine]3 + H(+). It catalyses the reaction Fe(III)-[N-(2,3-dihydroxybenzoyl)-L-serine]3 + H2O + H(+) = Fe(III)-[N-(2,3-dihydroxybenzoyl)-L-serine]2 + N-(2,3-dihydroxybenzoyl)-L-serine. The enzyme catalyses Fe(III)-[N-(2,3-dihydroxybenzoyl)-L-serine]2 + H2O + H(+) = Fe(III)-[N-(2,3-dihydroxybenzoyl)-L-serine] + N-(2,3-dihydroxybenzoyl)-L-serine. The catalysed reaction is enterobactin + 3 H2O = 3 N-(2,3-dihydroxybenzoyl)-L-serine + 2 H(+). Functionally, catalyzes the hydrolysis of ferric enterobactin (Fe-Ent). Is responsible for the release of iron from ferric enterobactin. Also catalyzes the hydrolysis of iron-free enterobactin (Ent). Hydrolyzes ferric monoglucosyl-C-Ent (Fe-MGE) poorly and does not hydrolyze ferric diglucosyl-C-Ent (Fe-DGE) or ferric triglucosyl-C-Ent (Fe-TGE) at all. Also hydrolyzes apo MGE, but catalyzes the hydrolysis of apo DGE very poorly, and does not process apo TGE at all. The catalytic efficiency for processing Fe-Ent is much higher than that for apo Ent, suggesting that Fe-Ent is the physiological substrate. This Escherichia coli O6:H1 (strain CFT073 / ATCC 700928 / UPEC) protein is Iron(III) enterobactin esterase.